A 492-amino-acid polypeptide reads, in one-letter code: Sestrin-1 (492 aa).

The interval 71–252 (FADSFAALGR…ICDITNGNHS (182 aa)) is N-terminal domain; may mediate the alkylhydroperoxide reductase activity. Cys130 acts as the Cysteine sulfenic acid (-SOH) intermediate in catalysis. Phosphoserine occurs at positions 293 and 314. The interval 321-492 (PARDVSRHFE…ALRAITRYMT (172 aa)) is C-terminal domain; mediates TORC1 regulation. Residues 386 to 389 (TYNT), Thr398, and Glu463 contribute to the L-leucine site.

The protein belongs to the sestrin family. As to quaternary structure, interacts with the GATOR2 complex which is composed of MIOS, SEC13, SEH1L, WDR24 and WDR59; the interaction is negatively regulated by leucine. Interacts with RRAGA, RRAGB, RRAGC and RRAGD; may function as a guanine nucleotide dissociation inhibitor for RRAGs and regulate them. Interacts with KEAP1, RBX1 and SQSTM1; in the SQSTM1-dependent autophagic degradation of KEAP1. May interact with PRDX1. Highly expressed in heart and also detected in liver and skeletal muscles (at protein level).

Its subcellular location is the nucleus. It is found in the cytoplasm. It catalyses the reaction a hydroperoxide + L-cysteinyl-[protein] = S-hydroxy-L-cysteinyl-[protein] + an alcohol. Functions as an intracellular leucine sensor that negatively regulates the TORC1 signaling pathway through the GATOR complex. In absence of leucine, binds the GATOR subcomplex GATOR2 and prevents TORC1 signaling. Binding of leucine to SESN2 disrupts its interaction with GATOR2 thereby activating the TORC1 signaling pathway. This stress-inducible metabolic regulator may also play a role in protection against oxidative and genotoxic stresses. May positively regulate the transcription by NFE2L2 of genes involved in the response to oxidative stress by facilitating the SQSTM1-mediated autophagic degradation of KEAP1. Moreover, may prevent the accumulation of reactive oxygen species (ROS) through the alkylhydroperoxide reductase activity born by the N-terminal domain of the protein. Was originally reported to contribute to oxidative stress resistance by reducing PRDX1. However, this could not be confirmed. The polypeptide is Sestrin-1 (Mus musculus (Mouse)).